The primary structure comprises 85 residues: Large ribosomal subunit protein bL27 (85 aa).

Residues 1–22 (MAHKKAGGSTKNGRDSESKRLG) form a disordered region.

It belongs to the bacterial ribosomal protein bL27 family.

In Alteromonas mediterranea (strain DSM 17117 / CIP 110805 / LMG 28347 / Deep ecotype), this protein is Large ribosomal subunit protein bL27.